A 397-amino-acid polypeptide reads, in one-letter code: 3-ketoacyl-CoA thiolase, mitochondrial (397 aa).

The N-terminal 16 residues, 1-16 (MALLRGVFIVAAKRTP), are a transit peptide targeting the mitochondrion; not cleaved. Lysine 25 bears the N6-acetyllysine; alternate mark. The residue at position 25 (lysine 25) is an N6-succinyllysine; alternate. The active-site Acyl-thioester intermediate is cysteine 92. At threonine 119 the chain carries Phosphothreonine. At serine 121 the chain carries Phosphoserine. A Phosphotyrosine modification is found at tyrosine 127. Residue threonine 136 is modified to Phosphothreonine. Position 137 is an N6-acetyllysine; alternate (lysine 137). Lysine 137 carries the post-translational modification N6-succinyllysine; alternate. Serine 140 is subject to Phosphoserine. 4 positions are modified to N6-acetyllysine; alternate: lysine 143, lysine 171, lysine 191, and lysine 209. Lysine 143, lysine 171, lysine 191, and lysine 209 each carry N6-succinyllysine; alternate. N6-succinyllysine is present on residues lysine 212 and lysine 214. 2 residues coordinate CoA: arginine 224 and threonine 227. Lysine 234 is subject to N6-acetyllysine; alternate. Lysine 234 bears the N6-succinyllysine; alternate mark. Lysine 240 carries the post-translational modification N6-succinyllysine. Lysine 241 is modified (N6-acetyllysine). Residue serine 251 participates in CoA binding. N6-acetyllysine occurs at positions 269 and 270. Lysine 305 is subject to N6-acetyllysine; alternate. Lysine 305 carries the post-translational modification N6-succinyllysine; alternate. Position 310 is a phosphoserine (serine 310). N6-acetyllysine; alternate is present on lysine 312. Residue lysine 312 is modified to N6-succinyllysine; alternate. Phosphoserine is present on serine 333. Residues lysine 340 and lysine 375 each carry the N6-acetyllysine modification. Residue cysteine 382 is the Proton donor/acceptor of the active site.

This sequence belongs to the thiolase-like superfamily. Thiolase family. In terms of assembly, homotetramer. Interacts with BNIP3.

The protein localises to the mitochondrion. It catalyses the reaction an acyl-CoA + acetyl-CoA = a 3-oxoacyl-CoA + CoA. The enzyme catalyses 2 acetyl-CoA = acetoacetyl-CoA + CoA. It carries out the reaction acetyl-CoA + H2O = acetate + CoA + H(+). The catalysed reaction is propanoyl-CoA + H2O = propanoate + CoA + H(+). It catalyses the reaction butanoyl-CoA + H2O = butanoate + CoA + H(+). The enzyme catalyses hexanoyl-CoA + H2O = hexanoate + CoA + H(+). It carries out the reaction octanoyl-CoA + H2O = octanoate + CoA + H(+). The catalysed reaction is decanoyl-CoA + H2O = decanoate + CoA + H(+). It catalyses the reaction dodecanoyl-CoA + H2O = dodecanoate + CoA + H(+). The enzyme catalyses tetradecanoyl-CoA + H2O = tetradecanoate + CoA + H(+). It carries out the reaction hexadecanoyl-CoA + H2O = hexadecanoate + CoA + H(+). It participates in lipid metabolism; fatty acid beta-oxidation. In terms of biological role, in the production of energy from fats, this is one of the enzymes that catalyzes the last step of the mitochondrial beta-oxidation pathway, an aerobic process breaking down fatty acids into acetyl-CoA. Using free coenzyme A/CoA, catalyzes the thiolytic cleavage of medium- to long-chain unbranched 3-oxoacyl-CoAs into acetyl-CoA and a fatty acyl-CoA shortened by two carbon atoms. Also catalyzes the condensation of two acetyl-CoA molecules into acetoacetyl-CoA and could be involved in the production of ketone bodies. Also displays hydrolase activity on various fatty acyl-CoAs. Thereby, could be responsible for the production of acetate in a side reaction to beta-oxidation. Abolishes BNIP3-mediated apoptosis and mitochondrial damage. This is 3-ketoacyl-CoA thiolase, mitochondrial (ACAA2) from Bos taurus (Bovine).